A 267-amino-acid chain; its full sequence is UPF0328 protein ECU06_0070 (267 aa).

The protein belongs to the UPF0328 family.

This chain is UPF0328 protein ECU06_0070, found in Encephalitozoon cuniculi (strain GB-M1) (Microsporidian parasite).